The primary structure comprises 816 residues: Phenylalanine--tRNA ligase beta subunit (816 aa).

One can recognise a tRNA-binding domain in the interval 40–148 (FEELAALKTG…EGMAHGQRFI (109 aa)). The B5 domain maps to 401–479 (KAVEVQRFSI…RIYGYDNVPT (79 aa)). 4 residues coordinate Mg(2+): Asp457, Asp463, Glu466, and Glu467. The 94-residue stretch at 721–814 (PVYPAVKRDI…LTDRFGGSFR (94 aa)) folds into the FDX-ACB domain.

The protein belongs to the phenylalanyl-tRNA synthetase beta subunit family. Type 1 subfamily. In terms of assembly, tetramer of two alpha and two beta subunits. The cofactor is Mg(2+).

The protein localises to the cytoplasm. It catalyses the reaction tRNA(Phe) + L-phenylalanine + ATP = L-phenylalanyl-tRNA(Phe) + AMP + diphosphate + H(+). This chain is Phenylalanine--tRNA ligase beta subunit, found in Desulfotalea psychrophila (strain LSv54 / DSM 12343).